The chain runs to 261 residues: Small ribosomal subunit protein eS1A (261 aa).

Over residues 1–18 (MTLGKNKRISKGGKRGKK) the composition is skewed to basic residues. Positions 1-23 (MTLGKNKRISKGGKRGKKKTQET) are disordered.

The protein belongs to the eukaryotic ribosomal protein eS1 family. In terms of assembly, component of the small ribosomal subunit. Mature ribosomes consist of a small (40S) and a large (60S) subunit. The 40S subunit contains about 33 different proteins and 1 molecule of RNA (18S). The 60S subunit contains about 49 different proteins and 3 molecules of RNA (25S, 5.8S and 5S).

It localises to the cytoplasm. This is Small ribosomal subunit protein eS1A from Trypanosoma cruzi (strain CL Brener).